We begin with the raw amino-acid sequence, 1051 residues long: Protein ALWAYS EARLY 2 (1051 aa).

Composition is skewed to basic residues over residues 1–11 (MAPVRKSRSVN) and 27–36 (SKKNKLRKKL). Residues 1 to 37 (MAPVRKSRSVNKRFTNETSPRKDAGKSKKNKLRKKLS) are disordered. The region spanning 39-93 (KLGPQWTRLELERFYDAYRKHGQEWRRVAAAIRNSRSVDMVEALFNMNRAYLSLP) is the SANT domain. 6 disordered regions span residues 114 to 158 (EGSG…IGSP), 170 to 210 (ANGT…RKQF), 225 to 293 (TDAS…KDTT), 323 to 375 (AECN…TSGA), 397 to 605 (SELS…SSRS), and 948 to 981 (SIEH…NAQM). Over residues 120–130 (GEGHDASEVPR) the composition is skewed to basic and acidic residues. Positions 131–140 (KQQKRKRAKP) are enriched in basic residues. The segment covering 279–293 (ESSRERKLDSDKDTT) has biased composition (basic and acidic residues). The span at 323-332 (AECNDSDDNG) shows a compositional bias: acidic residues. Composition is skewed to basic and acidic residues over residues 350-372 (AAIE…DKHT) and 403-417 (LKEE…EKSS). Residues 560–574 (KQVSDSGPTSLSQKP) show a composition bias toward polar residues. The span at 586–597 (LQEKAKSSETTH) shows a compositional bias: basic and acidic residues. The span at 967–981 (NDLNSQDGSEKNAQM) shows a compositional bias: polar residues.

As to quaternary structure, interacts with SNL1 (via PAH3). As to expression, expressed ubiquitously in vegetative and reproductive tissues.

The protein localises to the nucleus. In Arabidopsis thaliana (Mouse-ear cress), this protein is Protein ALWAYS EARLY 2 (ALY2).